A 388-amino-acid polypeptide reads, in one-letter code: P2X purinoceptor 4 (388 aa).

At 1-33 the chain is on the cytoplasmic side; that stretch reads MTGCCTVLGAFLFEYDTPRIVLIRSRKVGLMNR. Residues 34 to 54 form a helical membrane-spanning segment; it reads TVQLLILAYVIGWVFVWEKGY. The Extracellular portion of the chain corresponds to 55–338; it reads QETDSVVSSV…KFDIIPTMIN (284 aa). ATP contacts are provided by lysine 67 and lysine 69. CTP contacts are provided by lysine 67 and lysine 69. Residues asparagine 75, asparagine 110, asparagine 131, asparagine 153, and asparagine 184 are each glycosylated (N-linked (GlcNAc...) asparagine). 3 disulfides stabilise this stretch: cysteine 116-cysteine 165, cysteine 126-cysteine 149, and cysteine 132-cysteine 159. Residues threonine 186 and leucine 188 each contribute to the ATP site. Threonine 186 contributes to the CTP binding site. N-linked (GlcNAc...) asparagine glycans are attached at residues asparagine 199 and asparagine 208. 2 disulfides stabilise this stretch: cysteine 217/cysteine 227 and cysteine 261/cysteine 270. Asparagine 293, arginine 295, and lysine 313 together coordinate ATP. 3 residues coordinate CTP: asparagine 293, arginine 295, and lysine 313. The chain crosses the membrane as a helical span at residues 339–359; it reads IGSGLALLGVATVLCDVIVLY. Residues 360–388 are Cytoplasmic-facing; that stretch reads CMKKRYYYREKKYKYVEDYEQGLGNQMEQ.

This sequence belongs to the P2X receptor family. As to quaternary structure, functional P2RXs are organized as homomeric and heteromeric trimers. Forms heterotrimer with P2RX1. Interacts with P2RX7 (via C-terminus); this interaction is functional only in the presence of ATP. Forms heterotrimer with P2RX4; functional differences between homomeric P2RX4 and P2RX4/6 heterotrimer are minor. Interacts with AP1M2.

It localises to the cell membrane. Its subcellular location is the lysosome membrane. The enzyme catalyses K(+)(in) = K(+)(out). It catalyses the reaction Na(+)(in) = Na(+)(out). It carries out the reaction Ca(2+)(in) = Ca(2+)(out). With respect to regulation, activated by ATP. pH-dependent and inhibited by acidic pH. Functionally, ATP-gated nonselective transmembrane cation channel permeable to potassium, sodium and calcium. CTP, but not GTP or UTP, functions as a weak affinity agonist for P2RX4. Activated by extracellularly released ATP, it plays multiple role in immunity and central nervous system physiology. Could also function as an ATP-gated cation channel of lysosomal membranes. The sequence is that of P2X purinoceptor 4 (P2RX4) from Bos taurus (Bovine).